The following is an 88-amino-acid chain: Acyl carrier protein (88 aa).

Residues 4–79 form the Carrier domain; the sequence is DSVPAKVMEI…AAVDYIQNKM (76 aa). The residue at position 39 (S39) is an O-(pantetheine 4'-phosphoryl)serine.

It belongs to the acyl carrier protein (ACP) family. Post-translationally, 4'-phosphopantetheine is transferred from CoA to a specific serine of apo-ACP by AcpS. This modification is essential for activity because fatty acids are bound in thioester linkage to the sulfhydryl of the prosthetic group.

It is found in the cytoplasm. It participates in lipid metabolism; fatty acid biosynthesis. Carrier of the growing fatty acid chain in fatty acid biosynthesis. In Trichodesmium erythraeum (strain IMS101), this protein is Acyl carrier protein.